The following is a 610-amino-acid chain: MFDAKAFLADVPHLPGVYRMYDAKNTIIYVGKAKDLKKRLSSYFRSQLASKKTEALVANIHHIETTITHSETEALLLEHNYIKENQPKYNVLLRDDKSYPYILLTKHQHPRITSFRGSKKVAGEYFGPYPNAGAVRETLNLLQKLFPIRQCEDSYYKNRSRPCLQYQIGRCLAPCVEGYYSQAEYDNQVNLVRLFLQGKDGQVVEHLVQKMENAAQELDFEAAARFRDQIQSVRAVQEKQFVSNERLDDLDIISIAYQHGIACVHILFVRHGKVLGNRSYFPKVPNNTDLSELADTFVGQFYLQMNQHRTIPNQIIIDQSLSEVTALANVLSEQAGHKVSIADKNIRGDKSRYLALAKTNAEAALTLQLKQDTHIRQRYDSLKALLNLAEIKRMECFDISHTMGNQTVASCVVFDKNGPLKSDYRRFNIEGITGGDDYAAMEQALLKLYDRNLEEEKIPDIIFIDGGKGQLNRALETFTSLNVSWDKRKPLLVGVAKGVERKAGLETLLISKWDKEIHLPPDSPALHLIQHIRDESHNHAITGHRKKRQKAFTESGLESIAGVGAKRRQALLKYLGGMQGVKAATLEEIQSVPGISKQLAEVIFDTLQHS.

The 79-residue stretch at 13–91 folds into the GIY-YIG domain; sequence HLPGVYRMYD…IKENQPKYNV (79 aa). A UVR domain is found at 201-236; sequence GQVVEHLVQKMENAAQELDFEAAARFRDQIQSVRAV.

Belongs to the UvrC family. As to quaternary structure, interacts with UvrB in an incision complex.

It is found in the cytoplasm. Functionally, the UvrABC repair system catalyzes the recognition and processing of DNA lesions. UvrC both incises the 5' and 3' sides of the lesion. The N-terminal half is responsible for the 3' incision and the C-terminal half is responsible for the 5' incision. The polypeptide is UvrABC system protein C (Actinobacillus pleuropneumoniae serotype 5b (strain L20)).